The chain runs to 521 residues: MSL complex subunit 3 (521 aa).

In terms of domain architecture, Tudor-knot spans 13–71 (SGEKVLCFEPDPTKARVLYDAKIVDVIVGKDEKGRKIPEYLIHFNGWNRSWDRWAAEDH). Disordered stretches follow at residues 114-166 (KGLP…TRRE) and 298-409 (ATST…PSKE). The span at 139 to 149 (KDEEISEESDI) shows a compositional bias: acidic residues. Over residues 150–166 (EEKTEVKEEPELQTRRE) the composition is skewed to basic and acidic residues. Residues 168–517 (EERTITIEIP…CEAHYSTKNP (350 aa)) enclose the MRG domain. The tract at residues 290–440 (FFLPIKESAT…WKLVPDNYPP (151 aa)) is required for the histone acetyltransferase activity of the MSL complex. Residues Ser309 and Ser311 each carry the phosphoserine modification. Residues 316 to 329 (NPSTPQSTESQPTT) are compositionally biased toward low complexity. 2 positions are modified to phosphoserine: Ser367 and Ser400. Position 405 is a phosphothreonine (Thr405). Ser407 and Ser411 each carry phosphoserine.

Component of the MSL histone acetyltransferase complex at least composed of the KAT8/MOF, MSL1/hampin, MSL2 and MSL3. Interacts (via the MRG domain) with MSL1 and KAT8/MOF. In terms of tissue distribution, expressed in many tissues including liver, pancreas, heart, lung, kidney, skeletal muscle, brain, and placenta, with highest expression in skeletal muscle and heart.

It is found in the nucleus. Its function is as follows. Non-catalytic component of the MSL histone acetyltransferase complex, a multiprotein complex that mediates the majority of histone H4 acetylation at 'Lys-16' (H4K16ac), an epigenetic mark that prevents chromatin compaction. The MSL complex is required for chromosome stability and genome integrity by maintaining homeostatic levels of H4K16ac. The MSL complex is also involved in gene dosage by promoting up-regulation of genes expressed by the X chromosome. X up-regulation is required to compensate for autosomal biallelic expression. The MSL complex also participates in gene dosage compensation by promoting expression of Tsix non-coding RNA. Acts as a histone reader that specifically recognizes and binds histone H4 monomethylated at 'Lys-20' (H4K20Me1) in a DNA-dependent manner and is proposed to be involved in chromosomal targeting of the MSL complex. May play a role X inactivation in females. This Homo sapiens (Human) protein is MSL complex subunit 3.